Reading from the N-terminus, the 369-residue chain is Probable dual-specificity RNA methyltransferase RlmN (369 aa).

The Proton acceptor role is filled by Glu108. Residues 114 to 357 (YPDRATVCIS…CTVRDTRGQE (244 aa)) enclose the Radical SAM core domain. A disulfide bond links Cys121 and Cys362. [4Fe-4S] cluster-binding residues include Cys128, Cys132, and Cys135. S-adenosyl-L-methionine is bound by residues 183–184 (GE), Ser217, 240–242 (SLH), and Asn319. Residue Cys362 is the S-methylcysteine intermediate of the active site.

The protein belongs to the radical SAM superfamily. RlmN family. The cofactor is [4Fe-4S] cluster.

It localises to the cytoplasm. The catalysed reaction is adenosine(2503) in 23S rRNA + 2 reduced [2Fe-2S]-[ferredoxin] + 2 S-adenosyl-L-methionine = 2-methyladenosine(2503) in 23S rRNA + 5'-deoxyadenosine + L-methionine + 2 oxidized [2Fe-2S]-[ferredoxin] + S-adenosyl-L-homocysteine. The enzyme catalyses adenosine(37) in tRNA + 2 reduced [2Fe-2S]-[ferredoxin] + 2 S-adenosyl-L-methionine = 2-methyladenosine(37) in tRNA + 5'-deoxyadenosine + L-methionine + 2 oxidized [2Fe-2S]-[ferredoxin] + S-adenosyl-L-homocysteine. Its function is as follows. Specifically methylates position 2 of adenine 2503 in 23S rRNA and position 2 of adenine 37 in tRNAs. The polypeptide is Probable dual-specificity RNA methyltransferase RlmN (Saccharopolyspora erythraea (strain ATCC 11635 / DSM 40517 / JCM 4748 / NBRC 13426 / NCIMB 8594 / NRRL 2338)).